We begin with the raw amino-acid sequence, 1174 residues long: Nucleolar complex protein 1 (1174 aa).

Disordered stretches follow at residues 1-20 (MPAA…NKKI), 29-237 (VVKQ…EESQ), 715-742 (YEDV…VKSS), 893-922 (AQNK…LKEG), 944-1085 (GVDE…GGRS), and 1116-1174 (VKGQ…KRKH). The segment covering 33–63 (NKKEHPQRPKFEGKEQVKKPQKIKFGEDGKA) has biased composition (basic and acidic residues). Residues 95–104 (ASKSFNQNHK) show a composition bias toward polar residues. Basic and acidic residues-rich tracts occupy residues 113–122 (KFGEDREAVH) and 176–200 (KFGD…EDGA). Acidic residues-rich tracts occupy residues 207-216 (SDGDSDEELG) and 715-724 (YEDVKDEADD). Basic and acidic residues-rich tracts occupy residues 725-739 (TKDS…DNDV) and 897-906 (KQKEIKKDAA). Composition is skewed to acidic residues over residues 907–916 (EEGDDGEAGE), 945–954 (VDEEQDEEEL), 981–1038 (AEDE…DEGS), and 1048–1065 (DSSD…DDED). Residues 1127–1143 (NKDKSSDKQLKWEENRR) show a composition bias toward basic and acidic residues. Low complexity predominate over residues 1156 to 1166 (GKPAAKGGRPQ).

It belongs to the CBF/MAK21 family.

It localises to the nucleus. It is found in the nucleolus. Its function is as follows. Involved in rRNA processing and ribosome maturation. May also act as a transcription factor. The protein is Nucleolar complex protein 1 of Drosophila melanogaster (Fruit fly).